A 295-amino-acid chain; its full sequence is Elongation factor Ts (295 aa).

Residues 80–83 (TDFV) form an involved in Mg(2+) ion dislocation from EF-Tu region.

Belongs to the EF-Ts family.

Its subcellular location is the cytoplasm. Associates with the EF-Tu.GDP complex and induces the exchange of GDP to GTP. It remains bound to the aminoacyl-tRNA.EF-Tu.GTP complex up to the GTP hydrolysis stage on the ribosome. This Lysinibacillus sphaericus (strain C3-41) protein is Elongation factor Ts.